The primary structure comprises 254 residues: Imidazole glycerol phosphate synthase subunit HisF (254 aa).

Catalysis depends on residues Asp-13 and Asp-132.

Belongs to the HisA/HisF family. In terms of assembly, heterodimer of HisH and HisF.

It is found in the cytoplasm. It carries out the reaction 5-[(5-phospho-1-deoxy-D-ribulos-1-ylimino)methylamino]-1-(5-phospho-beta-D-ribosyl)imidazole-4-carboxamide + L-glutamine = D-erythro-1-(imidazol-4-yl)glycerol 3-phosphate + 5-amino-1-(5-phospho-beta-D-ribosyl)imidazole-4-carboxamide + L-glutamate + H(+). It participates in amino-acid biosynthesis; L-histidine biosynthesis; L-histidine from 5-phospho-alpha-D-ribose 1-diphosphate: step 5/9. Functionally, IGPS catalyzes the conversion of PRFAR and glutamine to IGP, AICAR and glutamate. The HisF subunit catalyzes the cyclization activity that produces IGP and AICAR from PRFAR using the ammonia provided by the HisH subunit. This Nautilia profundicola (strain ATCC BAA-1463 / DSM 18972 / AmH) protein is Imidazole glycerol phosphate synthase subunit HisF.